Here is a 243-residue protein sequence, read N- to C-terminus: MDELALSFSLTCLLPENRASLSPSQPLSFQCLKAPATLTWEDEKQQRWGQPHGPVSSPLLGDHRCLVPFRDLNPSSEVNTANLLESPSSLLLTSCYICSYFSFYILGEKRCHSLKRLRYSVCCKVCPNFCACGKENVSGTGQVCTGVHVGAKEQEEPGGTQALRSCGIYCLEERTDKASHEECRERSTLGRPQCTGLTPSLAGESPCPRLLPGSPTVRHLIASSCPGLSDPLPLPPGTLPLGS.

The first 19 residues, 1–19, serve as a signal peptide directing secretion; the sequence is MDELALSFSLTCLLPENRA. The N-linked (GlcNAc...) asparagine glycan is linked to N136.

The protein resides in the secreted. This is an uncharacterized protein from Homo sapiens (Human).